A 466-amino-acid chain; its full sequence is Hydroxyacid-oxoacid transhydrogenase, mitochondrial (466 aa).

K444 is subject to N6-acetyllysine. S451 is subject to Phosphoserine.

Belongs to the iron-containing alcohol dehydrogenase family. Hydroxyacid-oxoacid transhydrogenase subfamily.

It localises to the mitochondrion. It catalyses the reaction (S)-3-hydroxybutanoate + 2-oxoglutarate = (R)-2-hydroxyglutarate + acetoacetate. The catalysed reaction is 4-hydroxybutanoate + 2-oxoglutarate = (R)-2-hydroxyglutarate + succinate semialdehyde. Functionally, catalyzes the cofactor-independent reversible oxidation of gamma-hydroxybutyrate (GHB) to succinic semialdehyde (SSA) coupled to reduction of 2-ketoglutarate (2-KG) to D-2-hydroxyglutarate (D-2-HG). L-3-hydroxybutyrate (L-3-OHB) is also a substrate for HOT when using 2-KG as hydrogen acceptor, resulting in the formation of D-2-HG. The protein is Hydroxyacid-oxoacid transhydrogenase, mitochondrial (ADHFE1) of Bos taurus (Bovine).